The following is a 181-amino-acid chain: Cytochrome c-type biogenesis protein CcmE (181 aa).

Residues 1 to 8 (MNPRRKSR) are Cytoplasmic-facing. A helical; Signal-anchor for type II membrane protein membrane pass occupies residues 9-29 (LKVVVSIIFGVAVAAGLTLYA). The Periplasmic segment spans residues 30–181 (LSQNIDLFYT…TLKTLQGEAN (152 aa)). 2 residues coordinate heme: histidine 131 and tyrosine 135. Composition is skewed to basic and acidic residues over residues 135–148 (YMPP…KEQH) and 156–166 (ADLKGTSARDK). The disordered stretch occupies residues 135–166 (YMPPELGDKLKEQHGAAGISEADLKGTSARDK).

Belongs to the CcmE/CycJ family.

It is found in the cell inner membrane. In terms of biological role, heme chaperone required for the biogenesis of c-type cytochromes. Transiently binds heme delivered by CcmC and transfers the heme to apo-cytochromes in a process facilitated by CcmF and CcmH. This chain is Cytochrome c-type biogenesis protein CcmE, found in Actinobacillus pleuropneumoniae serotype 7 (strain AP76).